Reading from the N-terminus, the 233-residue chain is Demethylmenaquinone methyltransferase (233 aa).

S-adenosyl-L-methionine contacts are provided by residues threonine 58, aspartate 79, and 106-107; that span reads NA.

The protein belongs to the class I-like SAM-binding methyltransferase superfamily. MenG/UbiE family.

It carries out the reaction a 2-demethylmenaquinol + S-adenosyl-L-methionine = a menaquinol + S-adenosyl-L-homocysteine + H(+). It functions in the pathway quinol/quinone metabolism; menaquinone biosynthesis; menaquinol from 1,4-dihydroxy-2-naphthoate: step 2/2. Methyltransferase required for the conversion of demethylmenaquinol (DMKH2) to menaquinol (MKH2). This is Demethylmenaquinone methyltransferase from Bacillus velezensis (strain DSM 23117 / BGSC 10A6 / LMG 26770 / FZB42) (Bacillus amyloliquefaciens subsp. plantarum).